Consider the following 608-residue polypeptide: Chaperone protein HtpG (608 aa).

The tract at residues 1–332 is a; substrate-binding; sequence MQFQTEVNQL…VEDLPLNVSR (332 aa). Residues 333 to 536 form a b region; it reads EILQENQILK…KNKLDFAMQQ (204 aa). The tract at residues 537–608 is c; the sequence is LLKQMGQEQN…LTKIINKAFS (72 aa).

This sequence belongs to the heat shock protein 90 family. In terms of assembly, homodimer.

The protein localises to the cytoplasm. Molecular chaperone. Has ATPase activity. This Campylobacter jejuni subsp. doylei (strain ATCC BAA-1458 / RM4099 / 269.97) protein is Chaperone protein HtpG.